Here is a 342-residue protein sequence, read N- to C-terminus: Organic solute transporter alpha-like protein 2 (342 aa).

Residues 1–50 (MLEISPWETLVKLLTDSLLNCTGTHEDVPHAKTFLRSLTTTYIASLAVAT) lie on the Extracellular side of the membrane. N-linked (GlcNAc...) asparagine glycosylation is present at asparagine 20. The helical transmembrane segment at 51–71 (AVTVGTVCLAVLHLIYIHFYI) threads the bilayer. The Cytoplasmic segment spans residues 72 to 79 (THSSRRLH). Residues 80–100 (IVLLACTAPLVSLLALVAMYM) form a helical membrane-spanning segment. Over 101 to 109 (PRVWFLSHL) the chain is Extracellular. The chain crosses the membrane as a helical span at residues 110-130 (LSFLYFSFALWVIICLLLHIF). At 131–176 (DGHHALVTKMMQRLQYVEIATPPFCCLFPCLPKVRLEGKKIRWCEL) the chain is on the cytoplasmic side. A helical transmembrane segment spans residues 177 to 197 (MVMQAPIVRLFATLVSLVIYF). Topologically, residues 198 to 208 (EYQDQGLVPLK) are extracellular. A helical membrane pass occupies residues 209–229 (VLDFITLPSLLAGIYGTHILV). Residues 230–243 (TTVSRMDELISYRY) are Cytoplasmic-facing. A helical membrane pass occupies residues 244–264 (VVVFRLLDFFFMVFGLQQPVF). Over 265-290 (DFLARYGAFGCGTVLPAIETSFYWKN) the chain is Extracellular. A helical membrane pass occupies residues 291–311 (FFTVIEAFCVTLISTVLLQPS). The Cytoplasmic portion of the chain corresponds to 312–342 (KSSFFDKHPSCRSMSSARSTITDVDTDESTT).

This sequence belongs to the OST-alpha family.

It is found in the cell membrane. Its function is as follows. Probable transporter. The polypeptide is Organic solute transporter alpha-like protein 2 (osta-2) (Caenorhabditis elegans).